We begin with the raw amino-acid sequence, 336 residues long: Flavonoid 6-O-methyltransferase 4 (336 aa).

2 residues coordinate S-adenosyl-L-methionine: Tyr-140 and Asp-203. His-241 serves as the catalytic Proton acceptor.

This sequence belongs to the class I-like SAM-binding methyltransferase superfamily. Cation-independent O-methyltransferase family. In terms of assembly, homodimer. As to expression, expressed in leaves.

It catalyses the reaction ladanein + S-adenosyl-L-methionine = salvigenin + S-adenosyl-L-homocysteine + H(+). It carries out the reaction scutellarein 7-methyl ether + S-adenosyl-L-methionine = cirsimaritin + S-adenosyl-L-homocysteine + H(+). It functions in the pathway flavonoid metabolism. Its function is as follows. Flavonoid 6-O-methyltransferase involved in the biosynthesis of polymethoxylated flavonoids natural products such as nevadensin and salvigenin (SALV), aroma compounds which contribute to the flavor of sweet basil, and exhibit pharmacological activities such as anti-allergic, anti-oxidant, antibacterial, anti-proliferative, and anti-inflammatory effects. Catalyzes S-adenosylmethionine-dependent regioselective 6-O-methylation of flavonoids; active on various hydroxylated flavonoid substrates, including scutellarein-7-methyl ether (SCU7Me) and ladanein (LAD). The sequence is that of Flavonoid 6-O-methyltransferase 4 from Ocimum basilicum (Sweet basil).